Reading from the N-terminus, the 184-residue chain is Protein YrdA (184 aa).

This sequence belongs to the gamma-class carbonic anhydrase family.

The sequence is that of Protein YrdA (yrdA) from Escherichia coli (strain K12).